The following is a 537-amino-acid chain: Pentatricopeptide repeat-containing protein At1g02370, mitochondrial (537 aa).

The N-terminal 18 residues, 1-18 (MNFRNLIASGSRLGKRFC), are a transit peptide targeting the mitochondrion. PPR repeat units lie at residues 171 to 205 (HQSTYGALMNCYCVELEEEKAKAHFEIMDELNFVN), 206 to 240 (NSLPFNNMMSMYMRLSQPEKVPVLVDAMKQRGISP), 241 to 275 (CGVTYSIWMQSCGSLNDLDGLEKIIDEMGKDSEAK), 277 to 307 (TWNTFSNLAAIYTKAGLYEKADSALKSMEEK), 312 to 346 (NRDSHHFLMSLYAGISKGPEVYRVWESLKKARPEV), 347 to 377 (NNLSYLVMLQAMSKLGDLDGIKKIFTEWESK), and 382 to 416 (DMRLANIAINTYLKGNMYEEAEKILDGAMKKSKGP).

Belongs to the PPR family. P subfamily.

The protein localises to the mitochondrion. The protein is Pentatricopeptide repeat-containing protein At1g02370, mitochondrial of Arabidopsis thaliana (Mouse-ear cress).